The primary structure comprises 673 residues: Paralemmin-3 (673 aa).

Coiled coils occupy residues 4–49 (SSLY…LRER) and 75–101 (GQAQ…LQSA). Disordered stretches follow at residues 49-78 (RWLM…GQAQ) and 99-213 (QSAS…GEAK). The span at 123 to 137 (LSQSIVEAGSVGQTD) shows a compositional bias: polar residues. Phosphoserine occurs at positions 124 and 143. Phosphothreonine is present on threonine 151. Phosphoserine is present on residues serine 155, serine 157, and serine 260. Disordered stretches follow at residues 295–343 (VPEV…SFIW) and 356–673 (LLVE…CAVM). Threonine 301 is modified (phosphothreonine). Serine 325 carries the phosphoserine modification. Positions 327-338 (EGDGQGGSGGEE) are enriched in gly residues. Residues serine 375 and serine 420 each carry the phosphoserine modification. Composition is skewed to basic and acidic residues over residues 392-477 (EAEK…KRGA) and 487-532 (GVEK…EKTQ). Residues serine 544 and serine 660 each carry the phosphoserine modification. S-palmitoyl cysteine attachment occurs at residues cysteine 667 and cysteine 669. The residue at position 670 (cysteine 670) is a Cysteine methyl ester. The S-farnesyl cysteine moiety is linked to residue cysteine 670. Residues 671–673 (AVM) constitute a propeptide, removed in mature form.

The protein belongs to the paralemmin family. In terms of assembly, interacts with SIGIRR. Post-translationally, palmitoylated on Cys-667 and Cys-669 and prenylated on Cys-670; which is required for membrane association.

It is found in the cytoplasm. The protein localises to the cell membrane. Its function is as follows. ATP-binding protein, which may act as a adapter in the Toll-like receptor (TLR) signaling. The polypeptide is Paralemmin-3 (PALM3) (Homo sapiens (Human)).